The sequence spans 89 residues: Small ribosomal subunit protein uS15 (89 aa).

The protein belongs to the universal ribosomal protein uS15 family. Part of the 30S ribosomal subunit. Forms a bridge to the 50S subunit in the 70S ribosome, contacting the 23S rRNA.

One of the primary rRNA binding proteins, it binds directly to 16S rRNA where it helps nucleate assembly of the platform of the 30S subunit by binding and bridging several RNA helices of the 16S rRNA. Its function is as follows. Forms an intersubunit bridge (bridge B4) with the 23S rRNA of the 50S subunit in the ribosome. The polypeptide is Small ribosomal subunit protein uS15 (Edwardsiella ictaluri (strain 93-146)).